We begin with the raw amino-acid sequence, 812 residues long: Mitochondrial intermediate peptidase (812 aa).

The transit peptide at 1-35 (MLKLLRPRPWVCNSCLNRVAFPKPYPVGSRSTRWL) directs the protein to the mitochondrion. The segment at 518 to 544 (STSEGGPAFGSPESAANDGMAASRGAS) is disordered. His-587 contacts Zn(2+). Glu-588 is a catalytic residue. Residues His-591 and His-594 each coordinate Zn(2+).

The protein belongs to the peptidase M3 family. The cofactor is Zn(2+).

It is found in the mitochondrion matrix. It catalyses the reaction Release of an N-terminal octapeptide as second stage of processing of some proteins imported into the mitochondrion.. Functionally, cleaves proteins, imported into the mitochondrion, to their mature size. While most mitochondrial precursor proteins are processed to the mature form in one step by mitochondrial processing peptidase (MPP), the sequential cleavage by MIP of an octapeptide after initial processing by MPP is a required step for a subgroup of nuclear-encoded precursor proteins destined for the matrix or the inner membrane. The protein is Mitochondrial intermediate peptidase (OCT1) of Pyricularia oryzae (strain 70-15 / ATCC MYA-4617 / FGSC 8958) (Rice blast fungus).